Consider the following 215-residue polypeptide: Cytochrome b6 (215 aa).

The chain crosses the membrane as a helical span at residues 32–52; it reads IFYCIGGITFTCFLVQVATGF. Cys35 contributes to the heme c binding site. Positions 37, 83, 86, 100, 103, and 114 each coordinate heme b. Residues 90–110 form a helical membrane-spanning segment; the sequence is ASMMVLMMVLHVFRVYLTGGF. Transmembrane regions (helical) follow at residues 116-136 and 186-206; these read LTWV…VTGY and LHTF…FLMI. Positions 187 and 202 each coordinate heme b. Residues Arg207 and Ile211 each coordinate heme c. Ser212 contacts heme b.

Belongs to the cytochrome b family. PetB subfamily. As to quaternary structure, the 4 large subunits of the cytochrome b6-f complex are cytochrome b6, subunit IV (17 kDa polypeptide, PetD), cytochrome f and the Rieske protein, while the 4 small subunits are PetG, PetL, PetM and PetN. The complex functions as a dimer. The cofactor is heme b. Heme c is required as a cofactor. In terms of processing, the N-terminus is blocked.

It localises to the plastid. The protein resides in the chloroplast thylakoid membrane. Its function is as follows. Component of the cytochrome b6-f complex, which mediates electron transfer between photosystem II (PSII) and photosystem I (PSI), cyclic electron flow around PSI, and state transitions. This chain is Cytochrome b6, found in Chlamydomonas reinhardtii (Chlamydomonas smithii).